The sequence spans 59 residues: Large ribosomal subunit protein uL30 (59 aa).

This sequence belongs to the universal ribosomal protein uL30 family. As to quaternary structure, part of the 50S ribosomal subunit.

This chain is Large ribosomal subunit protein uL30, found in Leptospira interrogans serogroup Icterohaemorrhagiae serovar copenhageni (strain Fiocruz L1-130).